Reading from the N-terminus, the 223-residue chain is Urease accessory protein UreG (223 aa).

The interval 1–31 is disordered; that stretch reads MAKHSHDHTHDHHDRPRRVRKPGEPLRIGVG. Residue 32 to 39 participates in GTP binding; it reads GPVGSGKT.

This sequence belongs to the SIMIBI class G3E GTPase family. UreG subfamily. As to quaternary structure, homodimer. UreD, UreF and UreG form a complex that acts as a GTP-hydrolysis-dependent molecular chaperone, activating the urease apoprotein by helping to assemble the nickel containing metallocenter of UreC. The UreE protein probably delivers the nickel.

The protein localises to the cytoplasm. Functionally, facilitates the functional incorporation of the urease nickel metallocenter. This process requires GTP hydrolysis, probably effectuated by UreG. This Mycobacterium marinum (strain ATCC BAA-535 / M) protein is Urease accessory protein UreG.